Consider the following 154-residue polypeptide: MDWAESQFKTCTHGCDWKKISSDSADNRQYVPCVDSGAGRKSPRKVLLRSIEAVFNGSFSGNNRNVRGFLYVSIRDDDGEMRPVLIVPFGGYGYHNDFYYFEGKGKVECDISSDYVAPGIDWSRDMEVSISNSNNCNELCDLKCYVVCSLRIKE.

The protein belongs to the nanoviridae nuclear shuttle protein family.

The protein localises to the host nucleus. Its subcellular location is the host cytoplasm. In terms of biological role, putative nuclear shuttle protein. In Musa (BBTV), this protein is Putative nuclear shuttle protein (DNA-N).